Here is a 334-residue protein sequence, read N- to C-terminus: Thiamine thiazole synthase (334 aa).

Substrate-binding positions include Cys86, Glu107–Ala108, Gly115, and Val183. The residue at position 221 (Cys221) is a 2,3-didehydroalanine (Cys). Residues Asp223, His238, Met290, and Arg300 to Gly302 each bind substrate.

This sequence belongs to the THI4 family. As to quaternary structure, homooctamer. Fe cation is required as a cofactor. In terms of processing, during the catalytic reaction, a sulfide is transferred from Cys-221 to a reaction intermediate, generating a dehydroalanine residue.

It is found in the cytoplasm. The protein localises to the nucleus. It carries out the reaction [ADP-thiazole synthase]-L-cysteine + glycine + NAD(+) = [ADP-thiazole synthase]-dehydroalanine + ADP-5-ethyl-4-methylthiazole-2-carboxylate + nicotinamide + 3 H2O + 2 H(+). In terms of biological role, involved in biosynthesis of the thiamine precursor thiazole. Catalyzes the conversion of NAD and glycine to adenosine diphosphate 5-(2-hydroxyethyl)-4-methylthiazole-2-carboxylic acid (ADT), an adenylated thiazole intermediate. The reaction includes an iron-dependent sulfide transfer from a conserved cysteine residue of the protein to a thiazole intermediate. The enzyme can only undergo a single turnover, which suggests it is a suicide enzyme. May have additional roles in adaptation to various stress conditions and in DNA damage tolerance. This is Thiamine thiazole synthase from Ajellomyces capsulatus (strain G186AR / H82 / ATCC MYA-2454 / RMSCC 2432) (Darling's disease fungus).